Consider the following 198-residue polypeptide: Probable GTP-binding protein EngB (198 aa).

The EngB-type G domain maps to 22-196 (NLSEIAFVGR…WNWIKGQAEL (175 aa)). Residues 30 to 37 (GRSNVGKS), 57 to 61 (GKTQT), 75 to 78 (DVPG), 142 to 145 (TKAD), and 175 to 177 (FSA) each bind GTP. Mg(2+)-binding residues include S37 and T59.

The protein belongs to the TRAFAC class TrmE-Era-EngA-EngB-Septin-like GTPase superfamily. EngB GTPase family. The cofactor is Mg(2+).

Its function is as follows. Necessary for normal cell division and for the maintenance of normal septation. This is Probable GTP-binding protein EngB from Oenococcus oeni (strain ATCC BAA-331 / PSU-1).